Here is a 271-residue protein sequence, read N- to C-terminus: Co-chaperone protein DjlA (271 aa).

Residues 1–6 lie on the Periplasmic side of the membrane; it reads MQYWGK. The chain crosses the membrane as a helical span at residues 7 to 31; sequence IIGVAVALLMGGGFWGVVLGLLIGH. Residues 32-271 are Cytoplasmic-facing; the sequence is MFDKARSRKM…ELIKQQKGFK (240 aa). Positions 205–271 constitute a J domain; sequence DACNVLGVKP…ELIKQQKGFK (67 aa).

As to quaternary structure, homodimer.

Its subcellular location is the cell inner membrane. Functionally, regulatory DnaK co-chaperone. Direct interaction between DnaK and DjlA is needed for the induction of the wcaABCDE operon, involved in the synthesis of a colanic acid polysaccharide capsule, possibly through activation of the RcsB/RcsC phosphotransfer signaling pathway. The colanic acid capsule may help the bacterium survive conditions outside the host. The sequence is that of Co-chaperone protein DjlA from Escherichia coli O157:H7.